The following is a 580-amino-acid chain: Isochorismate synthase, chloroplastic (580 aa).

Residues 1–91 (MASITGHCVA…LAMERLSSAV (91 aa)) constitute a chloroplast transit peptide.

It belongs to the isochorismate synthase family. It depends on Mg(2+) as a cofactor.

The protein localises to the plastid. It localises to the chloroplast. The catalysed reaction is chorismate = isochorismate. Not inhibited by Tyr, Phe or Trp. Involved in the synthesis of o-succinylbenzoic acid, 2,3-dihydroxybenzoic acid and salicylic acid (SA). This is Isochorismate synthase, chloroplastic from Catharanthus roseus (Madagascar periwinkle).